Consider the following 332-residue polypeptide: Processive diacylglycerol alpha-glucosyltransferase (332 aa).

It belongs to the glycosyltransferase group 1 family. Glycosyltransferase 4 subfamily. The cofactor is Mg(2+).

The protein resides in the cell membrane. It carries out the reaction a 1,2-diacyl-sn-glycerol + UDP-alpha-D-glucose = a 1,2-diacyl-3-O-(alpha-D-glucopyranosyl)-sn-glycerol + UDP + H(+). It catalyses the reaction a 1,2-diacyl-3-O-(alpha-D-glucopyranosyl)-sn-glycerol + UDP-alpha-D-glucose = a 1,2-diacyl-3-O-[alpha-D-glucosyl-(1-&gt; 2)-alpha-D-glucosyl]-sn-glycerol + UDP + H(+). It functions in the pathway glycolipid metabolism; diglucosyl-diacylglycerol biosynthesis. With respect to regulation, activated by the negatively charged lipids phosphatidylglycerol (PG), cardiolipin (CL), nonbilayer-prone 1,3-DAG, 1,2-dioleoylphosphatidylglycerol (DOPG) and 1,2-dioleoylphosphatidylserine (DOPS). Inhibited by 1,2-diacyl-3-O-(alpha-D-galactopyranosyl)-sn-glycerol, 1,2-diacyl-3-O-[6-O-acyl(alpha-D-glucopyranosyl)]-sn-glycerol and 1,2-diacyl-3-O-[alpha-D-glucopyranosyl-(1-&gt;2)-O-(6-O-acyl-alpha-D-glucopyranosyl)]-sn-glycerol. Its function is as follows. Processive glucosyltransferase involved in the biosynthesis of both the non-bilayer-prone alpha-monoglucosyldiacylglycerol and the bilayer-forming membrane lipid alpha-diglucosyldiacylglycerol. These are major components for maintaining the anionic lipid surface charge density, for balancing the bilayer to non-bilayer phase equilibria and for keeping a constant lipid bilayer spontaneous curvature (curvature packing stress). Catalyzes the transfer of a glucosyl residue from UDP-Glc to diacylglycerol (DAG) acceptor to form the corresponding alpha-glucosyl-DAG (1,2-diacyl-3-O-(alpha-D-glucopyranosyl)-sn-glycerol), which then acts as acceptor to give alpha-diglucosyl-DAG product (3-O-(alpha-D-glucopyranosyl-alpha-(1-&gt;2)-D-glucopyranosyl)-1,2-diacyl-sn-glycerol). It can only use UDP-Glc as sugar donor. The polypeptide is Processive diacylglycerol alpha-glucosyltransferase (dgs) (Acholeplasma laidlawii).